The primary structure comprises 44 residues: Large ribosomal subunit protein bL34 (44 aa).

A disordered region spans residues 21-44 (RMDTSGGRRILSARRRKGRKTISA). Residues 31–44 (LSARRRKGRKTISA) are compositionally biased toward basic residues.

This sequence belongs to the bacterial ribosomal protein bL34 family.

The polypeptide is Large ribosomal subunit protein bL34 (Endomicrobium trichonymphae).